Here is a 499-residue protein sequence, read N- to C-terminus: Endoglucanase (499 aa).

Positions 1-29 (MKRSISIFITCLLIAVLTMGGLLPSPASA) are cleaved as a signal peptide. Substrate-binding positions include His-65, 69 to 70 (WY), Tyr-96, and His-131. Residue Glu-169 is the Proton donor of the active site. Tyr-231 is a binding site for substrate. Residue Glu-257 is the Nucleophile of the active site. Residues 263-264 (AS), Trp-291, and 296-298 (KQE) each bind substrate. Over residues 330–340 (RGTKDSTKDVP) the composition is skewed to basic and acidic residues. A disordered region spans residues 330–353 (RGTKDSTKDVPETPAQDNPTQEKG). The 150-residue stretch at 350 to 499 (QEKGVSVQYK…GKLIWGTEPN (150 aa)) folds into the CBM3 domain.

It belongs to the glycosyl hydrolase 5 (cellulase A) family.

The catalysed reaction is Endohydrolysis of (1-&gt;4)-beta-D-glucosidic linkages in cellulose, lichenin and cereal beta-D-glucans.. In Bacillus subtilis, this protein is Endoglucanase (bglC).